Consider the following 134-residue polypeptide: Inner membrane protein YqjE (134 aa).

Over 1 to 55 the chain is Cytoplasmic; that stretch reads MADTHHAQGPGKSVLGIGQRIVSIMVEMVETRLRLAVVELEEEKANLFQLLLMLG. The helical transmembrane segment at 56–76 threads the bilayer; sequence LTMLFAAFGLMSLMVLIIWAV. At 77 to 83 the chain is on the periplasmic side; the sequence is DPQYRLN. The chain crosses the membrane as a helical span at residues 84-104; sequence AMIATTVVLLLLALIGGIWTL. The Cytoplasmic segment spans residues 105-134; sequence RKSRKSTLLRHTRHELANDRQLLEEESREQ.

The protein resides in the cell inner membrane. The protein is Inner membrane protein YqjE (yqjE) of Escherichia coli O157:H7.